Consider the following 72-residue polypeptide: Large ribosomal subunit protein bL31 (72 aa).

This sequence belongs to the bacterial ribosomal protein bL31 family. Type A subfamily. In terms of assembly, part of the 50S ribosomal subunit.

Binds the 23S rRNA. The sequence is that of Large ribosomal subunit protein bL31 from Rhodospirillum rubrum (strain ATCC 11170 / ATH 1.1.1 / DSM 467 / LMG 4362 / NCIMB 8255 / S1).